A 462-amino-acid polypeptide reads, in one-letter code: MTRFSLTVLAVLAACFGSNIRPNVATLEPKTVCYYESWVHWRQGEGKMDPEDIDTSLCTHIVYSYFGIDAATHEIKLLDEYLMKDLHDMEHFTQHKGNAKAMIAVGGSTMSDQFSKTAAVEHYRETFVVSTVDLMTRYGFDGVMIDWSGMQAKDSDNFIKLLDKFDEKFAHTSFVMGVTLPATIASYDNYNIPAISNYVDFMNVLSLDYTGSWAHTVGHASPFPEQLKTLEAYHKRGAPRHKMVMAVPFYARTWILEKMNKQDIGDKASGPGPRGQFTQTDGFLSYNELCVQIQAETNAFTITRDHDNTAIYAVYVHSNHAEWISFEDRHTLGEKAKNITQQGYAGMSVYTLSNEDVHGVCGDKNPLLHAIQSNYYHGVVTEPTVVTLPPVTHTTEHVTDIPGVFHCHEEGFFRDKTYCATYYECKKGDFGLEKTVHHCANHLQAFDEVSRTCIDHTKIPGC.

The first 25 residues, 1–25 (MTRFSLTVLAVLAACFGSNIRPNVA), serve as a signal peptide directing secretion. Residues 29–378 (PKTVCYYESW…HAIQSNYYHG (350 aa)) enclose the GH18 domain. A disulfide bond links cysteine 33 and cysteine 58. An N-linked (GlcNAc...) asparagine glycan is attached at asparagine 338. In terms of domain architecture, Chitin-binding type-2 spans 404–462 (VFHCHEEGFFRDKTYCATYYECKKGDFGLEKTVHHCANHLQAFDEVSRTCIDHTKIPGC). Cysteine 439 and cysteine 453 are disulfide-bonded.

Belongs to the glycosyl hydrolase 18 family. Chitinase class II subfamily. In terms of tissue distribution, expressed in the upper digestive tract. Staining is observed in the ventriculus, and in very rare individuals, also in the intestine or esophagus. No expression in fecal pellets neither inside the rectum nor defecated outside of the body.

It localises to the secreted. In terms of biological role, probably a non-catalytic chitinase-like protein, which binds to insoluble chitin and enhances the activity of the catalytic chitinases. Has weak chitin-binding activity. This Dermatophagoides farinae (American house dust mite) protein is Chitinase-like mite allergen Der f 18.0101.